We begin with the raw amino-acid sequence, 234 residues long: GTP:AMP phosphotransferase, mitochondrial (234 aa).

Residue 24-29 (GSGKGT) participates in GTP binding. The segment at 45 to 74 (SSGDILRQEIKSESTLGREATTYIAQGKLL) is NMP. AMP-binding positions include Ser46, Arg51, 72–74 (KLL), 103–106 (GFPR), and Gln110. Positions 144–181 (NRYVHVPSGRVYNLQYNPPKVPGLDDITGEPLTKRLDD) are LID. Residues Arg145 and 154–155 (VY) each bind GTP. AMP contacts are provided by Arg178 and Arg189. Ser218 contacts GTP.

This sequence belongs to the adenylate kinase family. AK3 subfamily. As to quaternary structure, monomer.

Its subcellular location is the mitochondrion matrix. It carries out the reaction a ribonucleoside 5'-triphosphate + AMP = a ribonucleoside 5'-diphosphate + ADP. Its function is as follows. Involved in maintaining the homeostasis of cellular nucleotides by catalyzing the interconversion of nucleoside phosphates. Has GTP:AMP phosphotransferase and ITP:AMP phosphotransferase activities. Does not accept ATP as phosphate donor. In Saccharomyces cerevisiae (Baker's yeast), this protein is GTP:AMP phosphotransferase, mitochondrial.